We begin with the raw amino-acid sequence, 306 residues long: MSNEFINFEKISRESWKTLHQKAKALLTQEELKSITSLNDNISINDVIDIYLPLINLIQVYKIAQENLSFSKSLFLKKDIQLRPFIIGISGSVAVGKSTTSRLLQLLLSRTHSNSQVELVTTDGFLYPNQFLIEQGLLNRKGFPESYNMELLLDFLDSIKNGQTAFAPVYSHDIYDIIPNQKQSFNNPDFLIVEGINVFQNQQNNRLYMSDYFDFSIYIDADSSHIETWYIERFLSILKLAKRDPHNYYAQYAQLPRSEAIAFARNVWKTVNLENLEKFIEPTRNRAELILHKSADHKIDEIYLKK.

91-98 is a binding site for ATP; the sequence is GSVAVGKS.

It belongs to the prokaryotic pantothenate kinase family.

Its subcellular location is the cytoplasm. It carries out the reaction (R)-pantothenate + ATP = (R)-4'-phosphopantothenate + ADP + H(+). Its pathway is cofactor biosynthesis; coenzyme A biosynthesis; CoA from (R)-pantothenate: step 1/5. The chain is Pantothenate kinase (coaA) from Streptococcus pyogenes serotype M18 (strain MGAS8232).